Reading from the N-terminus, the 390-residue chain is ATP phosphoribosyltransferase regulatory subunit (390 aa).

Belongs to the class-II aminoacyl-tRNA synthetase family. HisZ subfamily. Heteromultimer composed of HisG and HisZ subunits.

It is found in the cytoplasm. It functions in the pathway amino-acid biosynthesis; L-histidine biosynthesis; L-histidine from 5-phospho-alpha-D-ribose 1-diphosphate: step 1/9. Its function is as follows. Required for the first step of histidine biosynthesis. May allow the feedback regulation of ATP phosphoribosyltransferase activity by histidine. The protein is ATP phosphoribosyltransferase regulatory subunit of Nitrosomonas eutropha (strain DSM 101675 / C91 / Nm57).